Reading from the N-terminus, the 265-residue chain is Apolipoprotein A-I (265 aa).

The signal sequence occupies residues 1-20; sequence METKAVVLTLAVLFLTGSQA. 2 tandem repeats follow at residues 69–90 and 91–112. Positions 69 to 265 are 10 X approximate tandem repeats; sequence LKILDNWDTL…DEATKKLNSQ (197 aa). Residues 113–123 form a 3; half-length repeat; the sequence is KDLEELKQKVQ. A run of 5 repeats spans residues 124–145, 146–167, 168–189, 190–209, and 210–230. Methionine 195 is subject to Methionine sulfoxide. The stretch at 231–241 is one 9; half-length repeat; the sequence is PALEDFRQGLM. At methionine 241 the chain carries Methionine sulfoxide. Repeat 10 spans residues 242–265; sequence PVLEGFQKSVLAALDEATKKLNSQ.

It belongs to the apolipoprotein A1/A4/E family. In terms of assembly, homodimer. Interacts with APOA1BP and CLU. Component of a sperm activating protein complex (SPAP), consisting of APOA1, an immunoglobulin heavy chain, an immunoglobulin light chain and albumin. Interacts with NDRG1. Interacts with SCGB3A2. Interacts with NAXE and YJEFN3. Post-translationally, glycosylated. In terms of processing, palmitoylated. Phosphorylation sites are present in the extracellular medium. In terms of tissue distribution, major protein of plasma HDL, also found in chylomicrons.

The protein resides in the secreted. In terms of biological role, participates in the reverse transport of cholesterol from tissues to the liver for excretion by promoting cholesterol efflux from tissues and by acting as a cofactor for the lecithin cholesterol acyltransferase (LCAT). As part of the SPAP complex, activates spermatozoa motility. The polypeptide is Apolipoprotein A-I (APOA1) (Orycteropus afer (Aardvark)).